The sequence spans 291 residues: Undecaprenyl-diphosphatase 2 (291 aa).

The next 6 helical transmembrane spans lie at Pro-39 to Phe-59, Ala-85 to Leu-105, Ile-118 to Ala-138, Phe-203 to Ala-223, Pro-231 to Met-251, and Phe-262 to Leu-282.

The protein belongs to the UppP family.

The protein resides in the cell membrane. The catalysed reaction is di-trans,octa-cis-undecaprenyl diphosphate + H2O = di-trans,octa-cis-undecaprenyl phosphate + phosphate + H(+). Its function is as follows. Catalyzes the dephosphorylation of undecaprenyl diphosphate (UPP). Confers resistance to bacitracin. The protein is Undecaprenyl-diphosphatase 2 of Streptomyces avermitilis (strain ATCC 31267 / DSM 46492 / JCM 5070 / NBRC 14893 / NCIMB 12804 / NRRL 8165 / MA-4680).